Reading from the N-terminus, the 97-residue chain is Large ribosomal subunit protein eL21 (97 aa).

The interval Met-1–Lys-23 is disordered.

The protein belongs to the eukaryotic ribosomal protein eL21 family.

The protein is Large ribosomal subunit protein eL21 of Picrophilus torridus (strain ATCC 700027 / DSM 9790 / JCM 10055 / NBRC 100828 / KAW 2/3).